The sequence spans 77 residues: MKKDWDPNDPKLKSPYAPHETAAVLRMHRVGFKGAHTMKLLKLRGTQLMNQIQRAMDAEQAAHRAGRPIHDAGVVKQ.

The polypeptide is Gene 68 protein (68) (Mycobacterium (Mycobacteriophage D29)).